Consider the following 493-residue polypeptide: Cytochrome P450 710A3 (493 aa).

The chain crosses the membrane as a helical span at residues 5–25 (VSLFASLTPYLVSALLLFLLL). Cys435 contributes to the heme binding site.

This sequence belongs to the cytochrome P450 family. Heme is required as a cofactor. In terms of tissue distribution, expressed in stems. Detected in primary root caps and immature petals.

It localises to the membrane. It carries out the reaction 5-dehydroepisterol + NADPH + O2 + H(+) = ergosta-5,7,22,24(28)-tetraen-3beta-ol + NADP(+) + 2 H2O. In terms of biological role, required to form the C-22 double bond in the sterol side chain. Possesses in vitro C-22 desaturase activity toward beta-sitosterol and produces stigmasterol. The polypeptide is Cytochrome P450 710A3 (Arabidopsis thaliana (Mouse-ear cress)).